The following is a 430-amino-acid chain: GTPase Obg (430 aa).

In terms of domain architecture, Obg spans 1–158 (MFVDQVTISL…LDVTLELKLL (158 aa)). Residues 118–145 (RGGRGGRGNSRFATPRNPAPDFSENGEP) form a disordered region. The region spanning 159 to 329 (ADVGLVGFPS…LLYAIADKLD (171 aa)) is the OBG-type G domain. Residues 165–172 (GFPSVGKS), 190–194 (FTTIK), 212–215 (DLPG), 282–285 (NKMD), and 310–312 (STI) each bind GTP. Mg(2+)-binding residues include Ser172 and Thr192. The 79-residue stretch at 352–430 (KHTPSQDKFT…ILGGEFEFVE (79 aa)) folds into the OCT domain.

It belongs to the TRAFAC class OBG-HflX-like GTPase superfamily. OBG GTPase family. Monomer. Requires Mg(2+) as cofactor.

It is found in the cytoplasm. An essential GTPase which binds GTP, GDP and possibly (p)ppGpp with moderate affinity, with high nucleotide exchange rates and a fairly low GTP hydrolysis rate. Plays a role in control of the cell cycle, stress response, ribosome biogenesis and in those bacteria that undergo differentiation, in morphogenesis control. In Staphylococcus haemolyticus (strain JCSC1435), this protein is GTPase Obg.